The chain runs to 232 residues: Ion-translocating oxidoreductase complex subunit E (232 aa).

The next 6 membrane-spanning stretches (helical) occupy residues 18–38 (GLVQ…LTNA), 39–59 (LGLG…VSLV), 69–89 (IPVF…LINA), 93–113 (GLYL…IIIG), 127–147 (AAFD…VLGA), and 182–202 (PFLL…LIAL).

It belongs to the NqrDE/RnfAE family. In terms of assembly, the complex is composed of six subunits: RnfA, RnfB, RnfC, RnfD, RnfE and RnfG.

It is found in the cell inner membrane. Its function is as follows. Part of a membrane-bound complex that couples electron transfer with translocation of ions across the membrane. This chain is Ion-translocating oxidoreductase complex subunit E, found in Shewanella sp. (strain MR-4).